The primary structure comprises 218 residues: Autophagy-related protein 101 (218 aa).

This sequence belongs to the ATG101 family.

It is found in the cytoplasm. It localises to the preautophagosomal structure. In terms of biological role, autophagy factor required for autophagosome formation. The chain is Autophagy-related protein 101 (atg101) from Xenopus laevis (African clawed frog).